The chain runs to 293 residues: MAVITAAMVGELRALTDAPMMECKKALTEADGDPVKAEEILRVKLGSKASKAASRVTAEGVVASCVVGNVGALVEVNCETDFVTKNDEFLALANACAKLIAEHNPADLAALGALPLDGKTLEEKRAELIGRIGENMSIRRFVRFETAGKVVSYLHGTRIGVMVDFDAADEQVGKDVAMHIAAMKPVALSSDDVPADLIAKERSVAELKAAESGKPAEIVTKMVEGSVHKYLKEVSLLNQTFVKNDKQTVEQMLKDTKSTVKAFTMYVVGEGIEKKQDDFAAEVAAQVAAAKQA.

The interval 80–83 (TDFV) is involved in Mg(2+) ion dislocation from EF-Tu.

It belongs to the EF-Ts family.

The protein resides in the cytoplasm. Functionally, associates with the EF-Tu.GDP complex and induces the exchange of GDP to GTP. It remains bound to the aminoacyl-tRNA.EF-Tu.GTP complex up to the GTP hydrolysis stage on the ribosome. This chain is Elongation factor Ts, found in Herminiimonas arsenicoxydans.